The chain runs to 122 residues: UPF0102 protein Cgl2031/cg2228 (122 aa).

It belongs to the UPF0102 family.

This chain is UPF0102 protein Cgl2031/cg2228, found in Corynebacterium glutamicum (strain ATCC 13032 / DSM 20300 / JCM 1318 / BCRC 11384 / CCUG 27702 / LMG 3730 / NBRC 12168 / NCIMB 10025 / NRRL B-2784 / 534).